Reading from the N-terminus, the 123-residue chain is Large ribosomal subunit protein bL12 (123 aa).

Belongs to the bacterial ribosomal protein bL12 family. As to quaternary structure, homodimer. Part of the ribosomal stalk of the 50S ribosomal subunit. Forms a multimeric L10(L12)X complex, where L10 forms an elongated spine to which 2 to 4 L12 dimers bind in a sequential fashion. Binds GTP-bound translation factors.

Its function is as follows. Forms part of the ribosomal stalk which helps the ribosome interact with GTP-bound translation factors. Is thus essential for accurate translation. This is Large ribosomal subunit protein bL12 from Pseudoalteromonas atlantica (strain T6c / ATCC BAA-1087).